We begin with the raw amino-acid sequence, 95 residues long: Defensin-A3 (95 aa).

Positions 1–19 (MRTLGLLLALLFLAAQTPA) are cleaved as a signal peptide. A propeptide spanning residues 20-61 (QLMGEEAEEATGRPEATEAQEAAAALMAARAADRHVTDPEQQ) is cleaved from the precursor. 3 cysteine pairs are disulfide-bonded: C66-C93, C68-C82, and C72-C92.

This sequence belongs to the alpha-defensin family. As to expression, highly expressed in spleen, and expressed at lower levels in intestin and lung.

Its subcellular location is the secreted. Its function is as follows. Has antimicrobial activity. In Ornithorhynchus anatinus (Duckbill platypus), this protein is Defensin-A3.